The chain runs to 147 residues: Large ribosomal subunit protein bL9 (147 aa).

This sequence belongs to the bacterial ribosomal protein bL9 family.

Binds to the 23S rRNA. In Halothermothrix orenii (strain H 168 / OCM 544 / DSM 9562), this protein is Large ribosomal subunit protein bL9.